The following is a 150-amino-acid chain: UPF0756 membrane protein Asuc_1151 (150 aa).

The next 4 membrane-spanning stretches (helical) occupy residues 1-21 (MSLH…LGVL), 52-72 (YGLN…IVAG), 82-102 (LLHW…WLAG), and 123-143 (ILGV…AGIL).

This sequence belongs to the UPF0756 family.

Its subcellular location is the cell membrane. This chain is UPF0756 membrane protein Asuc_1151, found in Actinobacillus succinogenes (strain ATCC 55618 / DSM 22257 / CCUG 43843 / 130Z).